Here is a 286-residue protein sequence, read N- to C-terminus: Shikimate dehydrogenase (NADP(+)) (286 aa).

Residues 19–21 and threonine 66 each bind shikimate; that span reads SVS. Lysine 70 (proton acceptor) is an active-site residue. 2 residues coordinate shikimate: asparagine 91 and aspartate 106. Residues 130–134 and alanine 225 contribute to the NADP(+) site; that span reads GAGGS. Tyrosine 227 is a binding site for shikimate. Residue glycine 248 coordinates NADP(+).

This sequence belongs to the shikimate dehydrogenase family. In terms of assembly, homodimer.

It carries out the reaction shikimate + NADP(+) = 3-dehydroshikimate + NADPH + H(+). It participates in metabolic intermediate biosynthesis; chorismate biosynthesis; chorismate from D-erythrose 4-phosphate and phosphoenolpyruvate: step 4/7. Involved in the biosynthesis of the chorismate, which leads to the biosynthesis of aromatic amino acids. Catalyzes the reversible NADPH linked reduction of 3-dehydroshikimate (DHSA) to yield shikimate (SA). The chain is Shikimate dehydrogenase (NADP(+)) from Dehalococcoides mccartyi (strain ATCC BAA-2266 / KCTC 15142 / 195) (Dehalococcoides ethenogenes (strain 195)).